A 392-amino-acid polypeptide reads, in one-letter code: Phosphopentomutase (392 aa).

Mn(2+)-binding residues include D15, D287, H292, D328, H329, and H340.

It belongs to the phosphopentomutase family. Requires Mn(2+) as cofactor.

It localises to the cytoplasm. It carries out the reaction 2-deoxy-alpha-D-ribose 1-phosphate = 2-deoxy-D-ribose 5-phosphate. The enzyme catalyses alpha-D-ribose 1-phosphate = D-ribose 5-phosphate. Its pathway is carbohydrate degradation; 2-deoxy-D-ribose 1-phosphate degradation; D-glyceraldehyde 3-phosphate and acetaldehyde from 2-deoxy-alpha-D-ribose 1-phosphate: step 1/2. Isomerase that catalyzes the conversion of deoxy-ribose 1-phosphate (dRib-1-P) and ribose 1-phosphate (Rib-1-P) to deoxy-ribose 5-phosphate (dRib-5-P) and ribose 5-phosphate (Rib-5-P), respectively. The protein is Phosphopentomutase of Syntrophotalea carbinolica (strain DSM 2380 / NBRC 103641 / GraBd1) (Pelobacter carbinolicus).